A 513-amino-acid chain; its full sequence is Glycerol-3-phosphate dehydrogenase (513 aa).

D16 to E44 serves as a coordination point for FAD.

The protein belongs to the FAD-dependent glycerol-3-phosphate dehydrogenase family. The cofactor is FAD.

Its subcellular location is the cytoplasm. The enzyme catalyses a quinone + sn-glycerol 3-phosphate = dihydroxyacetone phosphate + a quinol. The polypeptide is Glycerol-3-phosphate dehydrogenase (glpD) (Pseudomonas tolaasii).